Consider the following 93-residue polypeptide: Large ribosomal subunit protein uL23cz/uL23cy (93 aa).

Belongs to the universal ribosomal protein uL23 family. In terms of assembly, part of the 50S ribosomal subunit.

It is found in the plastid. Its subcellular location is the chloroplast. Its function is as follows. Binds to 23S rRNA. The sequence is that of Large ribosomal subunit protein uL23cz/uL23cy (rpl23-A) from Glycine max (Soybean).